The following is a 103-amino-acid chain: uncharacterized protein (103 aa).

The protein resides in the mitochondrion. This is an uncharacterized protein from Claviceps purpurea (Ergot fungus).